The sequence spans 418 residues: ATP-dependent Clp protease ATP-binding subunit ClpX (418 aa).

Residues methionine 1–leucine 54 form the ClpX-type ZB domain. Zn(2+)-binding residues include cysteine 13, cysteine 16, cysteine 35, and cysteine 38. Proline 120 to leucine 127 lines the ATP pocket.

The protein belongs to the ClpX chaperone family. In terms of assembly, component of the ClpX-ClpP complex. Forms a hexameric ring that, in the presence of ATP, binds to fourteen ClpP subunits assembled into a disk-like structure with a central cavity, resembling the structure of eukaryotic proteasomes.

Its function is as follows. ATP-dependent specificity component of the Clp protease. It directs the protease to specific substrates. Can perform chaperone functions in the absence of ClpP. The protein is ATP-dependent Clp protease ATP-binding subunit ClpX of Desulforapulum autotrophicum (strain ATCC 43914 / DSM 3382 / VKM B-1955 / HRM2) (Desulfobacterium autotrophicum).